The chain runs to 713 residues: Asp/Glu-specific dipeptidyl-peptidase (713 aa).

The signal sequence occupies residues 1–17 (MKYLKLFLLLFIIQTQA). Residues His83, Asp219, and Ser644 each act as charge relay system in the active site.

The protein belongs to the peptidase S46 family.

Functionally, catalyzes the removal of dipeptides from the N-terminus of oligopeptides. Shows a strict specificity for acidic residues (Asp or Glu) in the P1 position, and has probably a hydrophobic residue preference at the P2 position. Preferentially cleaves the synthetic substrate Leu-Asp-methylcoumaryl-7-amide (Leu-Asp-MCA) as compared to Leu-Glu-MCA. In Flavobacterium psychrophilum (strain ATCC 49511 / DSM 21280 / CIP 103535 / JIP02/86), this protein is Asp/Glu-specific dipeptidyl-peptidase (dpp11).